We begin with the raw amino-acid sequence, 133 residues long: MSNINLVQLVRDSLFTIGCPPSIITDLDSHSAITISLDSMPAINIALVNEQVMLWANFDAPSDVKLQSSAYNILNLMLMNFSYSINELVELHRSDEYLQLRVVIKDDYVHDGIVFAEILHEFYQRMEILNEVL.

The protein belongs to the SpaK family. Homodimer.

Functionally, required for surface presentation of invasion plasmid antigens. Chaperone specialized in the storage of effectors within the bacterial cytoplasm, maintaining them in a secretion-competent state, and allowing their immediate delivery to target cells upon contact of the bacterium with the host cells. The protein is Surface presentation of antigens protein SpaK (spaK) of Shigella sonnei.